Reading from the N-terminus, the 86-residue chain is Replication regulatory protein repA2 (86 aa).

Polar residues predominate over residues 1–14 (MSQTENAVTSSLSQ). Positions 1-31 (MSQTENAVTSSLSQKRFVRRGKPMTDSEKQM) are disordered.

Its function is as follows. This protein is involved in the determination of copy number in gene replication. It binds to the repA promoter thus inhibiting the synthesis of the mRNA for the initiator protein RepA. This is Replication regulatory protein repA2 (repA2) from Escherichia coli.